Reading from the N-terminus, the 150-residue chain is Peptide deformylase 1 (150 aa).

Fe cation-binding residues include C88 and H130. Residue E131 is part of the active site. H134 is a binding site for Fe cation.

This sequence belongs to the polypeptide deformylase family. Fe(2+) is required as a cofactor.

The enzyme catalyses N-terminal N-formyl-L-methionyl-[peptide] + H2O = N-terminal L-methionyl-[peptide] + formate. In terms of biological role, removes the formyl group from the N-terminal Met of newly synthesized proteins. Requires at least a dipeptide for an efficient rate of reaction. N-terminal L-methionine is a prerequisite for activity but the enzyme has broad specificity at other positions. The polypeptide is Peptide deformylase 1 (Clostridium acetobutylicum (strain ATCC 824 / DSM 792 / JCM 1419 / IAM 19013 / LMG 5710 / NBRC 13948 / NRRL B-527 / VKM B-1787 / 2291 / W)).